Reading from the N-terminus, the 287-residue chain is Nucleotide-binding protein Gbem_0872 (287 aa).

ATP is bound at residue 8–15 (GLSGSGKS). 59–62 (DIRS) is a GTP binding site.

It belongs to the RapZ-like family.

Its function is as follows. Displays ATPase and GTPase activities. The polypeptide is Nucleotide-binding protein Gbem_0872 (Citrifermentans bemidjiense (strain ATCC BAA-1014 / DSM 16622 / JCM 12645 / Bem) (Geobacter bemidjiensis)).